The sequence spans 493 residues: Glutamate--tRNA ligase (493 aa).

A 'HIGH' region motif is present at residues 10–20 (PSPTGDPHVGT). Cys107, Cys109, Cys134, and His136 together coordinate Zn(2+). The 'KMSKS' region signature appears at 251 to 255 (KLSKR). Lys254 provides a ligand contact to ATP.

It belongs to the class-I aminoacyl-tRNA synthetase family. Glutamate--tRNA ligase type 1 subfamily. As to quaternary structure, monomer. Zn(2+) is required as a cofactor.

Its subcellular location is the cytoplasm. It carries out the reaction tRNA(Glu) + L-glutamate + ATP = L-glutamyl-tRNA(Glu) + AMP + diphosphate. Functionally, catalyzes the attachment of glutamate to tRNA(Glu) in a two-step reaction: glutamate is first activated by ATP to form Glu-AMP and then transferred to the acceptor end of tRNA(Glu). This Ectopseudomonas mendocina (strain ymp) (Pseudomonas mendocina) protein is Glutamate--tRNA ligase.